The primary structure comprises 107 residues: Anti-adapter protein IraM (107 aa).

The protein belongs to the IraM/RssC family.

The protein localises to the cytoplasm. Functionally, inhibits RpoS proteolysis by regulating RssB activity, thereby increasing the stability of the sigma stress factor RpoS during magnesium starvation. The chain is Anti-adapter protein IraM from Escherichia coli O17:K52:H18 (strain UMN026 / ExPEC).